The sequence spans 229 residues: uncharacterized protein (229 aa).

This sequence to M.pneumoniae MPN_376 central region.

This is an uncharacterized protein from Mycoplasma pneumoniae (strain ATCC 29342 / M129 / Subtype 1) (Mycoplasmoides pneumoniae).